We begin with the raw amino-acid sequence, 125 residues long: uncharacterized protein (125 aa).

This is an uncharacterized protein from Acanthamoeba polyphaga (Amoeba).